A 158-amino-acid chain; its full sequence is NADH-quinone oxidoreductase subunit B 1 (158 aa).

[4Fe-4S] cluster-binding residues include cysteine 37, cysteine 38, cysteine 102, and cysteine 132.

It belongs to the complex I 20 kDa subunit family. In terms of assembly, NDH-1 is composed of 14 different subunits. Subunits NuoB, C, D, E, F, and G constitute the peripheral sector of the complex. [4Fe-4S] cluster is required as a cofactor.

Its subcellular location is the cell inner membrane. The enzyme catalyses a quinone + NADH + 5 H(+)(in) = a quinol + NAD(+) + 4 H(+)(out). NDH-1 shuttles electrons from NADH, via FMN and iron-sulfur (Fe-S) centers, to quinones in the respiratory chain. Couples the redox reaction to proton translocation (for every two electrons transferred, four hydrogen ions are translocated across the cytoplasmic membrane), and thus conserves the redox energy in a proton gradient. This Chromobacterium violaceum (strain ATCC 12472 / DSM 30191 / JCM 1249 / CCUG 213 / NBRC 12614 / NCIMB 9131 / NCTC 9757 / MK) protein is NADH-quinone oxidoreductase subunit B 1.